The chain runs to 121 residues: Large ribosomal subunit protein uL18 (121 aa).

Belongs to the universal ribosomal protein uL18 family. As to quaternary structure, part of the 50S ribosomal subunit; part of the 5S rRNA/L5/L18/L25 subcomplex. Contacts the 5S and 23S rRNAs.

This is one of the proteins that bind and probably mediate the attachment of the 5S RNA into the large ribosomal subunit, where it forms part of the central protuberance. This chain is Large ribosomal subunit protein uL18, found in Moorella thermoacetica (strain ATCC 39073 / JCM 9320).